A 425-amino-acid polypeptide reads, in one-letter code: tRNA(Ile)-lysidine synthase (425 aa).

Residue 27–32 (SGGLDS) participates in ATP binding.

This sequence belongs to the tRNA(Ile)-lysidine synthase family.

It localises to the cytoplasm. It carries out the reaction cytidine(34) in tRNA(Ile2) + L-lysine + ATP = lysidine(34) in tRNA(Ile2) + AMP + diphosphate + H(+). In terms of biological role, ligates lysine onto the cytidine present at position 34 of the AUA codon-specific tRNA(Ile) that contains the anticodon CAU, in an ATP-dependent manner. Cytidine is converted to lysidine, thus changing the amino acid specificity of the tRNA from methionine to isoleucine. In Streptococcus gordonii (strain Challis / ATCC 35105 / BCRC 15272 / CH1 / DL1 / V288), this protein is tRNA(Ile)-lysidine synthase.